The sequence spans 433 residues: Divalent metal cation transporter MntH (433 aa).

Transmembrane regions (helical) follow at residues 32 to 52 (LIFAGPAVVASIAYMDPGNFA), 62 to 82 (GYDLLWVVLLASLIAMLFQGL), 101 to 121 (TLPPALTIPMWIISEIAAMAT), 131 to 151 (IGIALLAHLPLMAGMAITGIV), 168 to 188 (LVIGALVGVIALCYLAELLIV), 209 to 229 (ALTIAVGIVGATVMPHALFLH), 256 to 276 (VLAALGVAGMVNMAMVAMAAG), 296 to 316 (SPLLGAGAAVIFLISLLASGV), 345 to 365 (ALTMIPGFVVIGLGVNPTRAL), 366 to 386 (VLSQVVLSLALPVPMLALLWF), and 401 to 421 (ITAIAAIGGAIVILGLNVILL).

It belongs to the NRAMP family.

It localises to the cell inner membrane. Its function is as follows. H(+)-stimulated, divalent metal cation uptake system. The chain is Divalent metal cation transporter MntH from Acidiphilium cryptum (strain JF-5).